A 391-amino-acid chain; its full sequence is Phosphoglycerate kinase (391 aa).

Residues 21–23, Arg36, 59–62, Arg113, and Arg146 contribute to the substrate site; these read DLN and HLGR. Residues Lys197, Glu319, and 345–348 contribute to the ATP site; that span reads GGDT.

This sequence belongs to the phosphoglycerate kinase family. As to quaternary structure, monomer.

It is found in the cytoplasm. It carries out the reaction (2R)-3-phosphoglycerate + ATP = (2R)-3-phospho-glyceroyl phosphate + ADP. Its pathway is carbohydrate degradation; glycolysis; pyruvate from D-glyceraldehyde 3-phosphate: step 2/5. This Pseudoalteromonas atlantica (strain T6c / ATCC BAA-1087) protein is Phosphoglycerate kinase.